The sequence spans 361 residues: DNA replication and repair protein RecF (361 aa).

An ATP-binding site is contributed by 30-37 (GANGSGKT).

The protein belongs to the RecF family.

The protein resides in the cytoplasm. Its function is as follows. The RecF protein is involved in DNA metabolism; it is required for DNA replication and normal SOS inducibility. RecF binds preferentially to single-stranded, linear DNA. It also seems to bind ATP. This is DNA replication and repair protein RecF from Pectobacterium atrosepticum (strain SCRI 1043 / ATCC BAA-672) (Erwinia carotovora subsp. atroseptica).